The following is a 242-amino-acid chain: MSEWLFDLGNSRFKYAPLHGNRAGQVQAWAHGAEAMDAAALAALPSGRIAYVASVAAPALTQRMIACLQERFTQVRIVRTTAECAGIRIAYADPSRFGVDRFLALLGARGDAPVLVAGVGTALTIDVLGADGLHHGGRIAASPTTMREALHARAVQLPASGGDYVELAIDTDDALTSGCDGAAVALIERSLQHAQRSLGVPVRLLVHGGGAPPLLPLLPDATFRAALVLDGLATWATAASSP.

7 to 14 provides a ligand contact to ATP; sequence DLGNSRFK. Substrate-binding positions include tyrosine 91 and 98–101; that span reads GVDR. Aspartate 100 serves as the catalytic Proton acceptor. Threonine 121 provides a ligand contact to ATP. Substrate is bound at residue threonine 171.

The protein belongs to the type III pantothenate kinase family. As to quaternary structure, homodimer. NH4(+) is required as a cofactor. Requires K(+) as cofactor.

It localises to the cytoplasm. The enzyme catalyses (R)-pantothenate + ATP = (R)-4'-phosphopantothenate + ADP + H(+). It functions in the pathway cofactor biosynthesis; coenzyme A biosynthesis; CoA from (R)-pantothenate: step 1/5. Its function is as follows. Catalyzes the phosphorylation of pantothenate (Pan), the first step in CoA biosynthesis. This is Type III pantothenate kinase from Xanthomonas axonopodis pv. citri (strain 306).